The chain runs to 511 residues: Maturase K (511 aa).

Belongs to the intron maturase 2 family. MatK subfamily.

Its subcellular location is the plastid. The protein localises to the chloroplast. Its function is as follows. Usually encoded in the trnK tRNA gene intron. Probably assists in splicing its own and other chloroplast group II introns. The sequence is that of Maturase K from Adesmia lanata.